A 431-amino-acid polypeptide reads, in one-letter code: uncharacterized protein (431 aa).

Disordered regions lie at residues 1 to 37 and 102 to 132; these read MFWR…KLTP and PPPL…RRVA. A compositionally biased stretch (basic and acidic residues) spans 22–32; it reads GDFRRSSDPRL. A compositionally biased stretch (low complexity) spans 106–121; it reads LSAGASRESAPRQPGP. Basic and acidic residues predominate over residues 122–132; sequence GERERPRRRVA.

It localises to the cytoplasm. This is an uncharacterized protein from Homo sapiens (Human).